Reading from the N-terminus, the 87-residue chain is UPF0250 protein PC1_1177 (87 aa).

Belongs to the UPF0250 family.

The chain is UPF0250 protein PC1_1177 from Pectobacterium carotovorum subsp. carotovorum (strain PC1).